Reading from the N-terminus, the 282-residue chain is Aldo-keto reductase MUL_1987 (282 aa).

Residue Tyr-57 is the Proton donor of the active site. Residues Leu-197, Ile-235, Ser-238, Thr-246, Asn-247, and Arg-273 each contribute to the NADPH site.

The protein belongs to the aldo/keto reductase family.

In Mycobacterium ulcerans (strain Agy99), this protein is Aldo-keto reductase MUL_1987.